Reading from the N-terminus, the 217-residue chain is Adenylate kinase (217 aa).

Residue 10–15 (GAGKGT) coordinates ATP. The segment at 30–59 (STGDMLRAAVKAGTPLGIEAKKVMDAGGLV) is NMP. AMP-binding positions include Thr31, Arg36, 57 to 59 (GLV), 85 to 88 (GFPR), and Gln92. An LID region spans residues 122-159 (GRRAHLASGRTYHVKYNPPKVEGKDDVTGEDLVQRDDD). ATP-binding positions include Arg123 and 132-133 (TY). AMP is bound by residues Arg156 and Arg167. Residue Gly203 coordinates ATP.

Belongs to the adenylate kinase family. As to quaternary structure, monomer.

The protein localises to the cytoplasm. The catalysed reaction is AMP + ATP = 2 ADP. The protein operates within purine metabolism; AMP biosynthesis via salvage pathway; AMP from ADP: step 1/1. Functionally, catalyzes the reversible transfer of the terminal phosphate group between ATP and AMP. Plays an important role in cellular energy homeostasis and in adenine nucleotide metabolism. The protein is Adenylate kinase of Azoarcus sp. (strain BH72).